The primary structure comprises 477 residues: ATP synthase subunit beta (477 aa).

Position 155-162 (155-162 (GGAGVGKT)) interacts with ATP.

Belongs to the ATPase alpha/beta chains family. F-type ATPases have 2 components, CF(1) - the catalytic core - and CF(0) - the membrane proton channel. CF(1) has five subunits: alpha(3), beta(3), gamma(1), delta(1), epsilon(1). CF(0) has three main subunits: a(1), b(2) and c(9-12). The alpha and beta chains form an alternating ring which encloses part of the gamma chain. CF(1) is attached to CF(0) by a central stalk formed by the gamma and epsilon chains, while a peripheral stalk is formed by the delta and b chains.

Its subcellular location is the cell inner membrane. It carries out the reaction ATP + H2O + 4 H(+)(in) = ADP + phosphate + 5 H(+)(out). Functionally, produces ATP from ADP in the presence of a proton gradient across the membrane. The catalytic sites are hosted primarily by the beta subunits. The sequence is that of ATP synthase subunit beta from Mesorhizobium japonicum (strain LMG 29417 / CECT 9101 / MAFF 303099) (Mesorhizobium loti (strain MAFF 303099)).